Here is a 64-residue protein sequence, read N- to C-terminus: Conotoxin Ts-011 (64 aa).

Residues 1–22 form the signal peptide; that stretch reads MHCLPVPVILLLLIASTPSVDA. Positions 23 to 51 are excised as a propeptide; it reads RPKTKDDVPPASFHGADNANRILRTLWNL. Ile63 is modified (isoleucine amide).

Belongs to the conotoxin T superfamily. Post-translationally, contains 2 disulfide bonds that can be either 'C1-C3, C2-C4' or 'C1-C4, C2-C3', since these disulfide connectivities have been observed for conotoxins with cysteine framework V (for examples, see AC P0DQQ7 and AC P81755). Expressed by the venom duct.

It is found in the secreted. This Conus tessulatus (Tessellate cone) protein is Conotoxin Ts-011.